A 228-amino-acid chain; its full sequence is Small ribosomal subunit protein uS3 (228 aa).

The region spanning 39–107 is the KH type-2 domain; it reads TREYLQDKLK…PVHINIEEIR (69 aa).

The protein belongs to the universal ribosomal protein uS3 family. In terms of assembly, part of the 30S ribosomal subunit. Forms a tight complex with proteins S10 and S14.

Its function is as follows. Binds the lower part of the 30S subunit head. Binds mRNA in the 70S ribosome, positioning it for translation. The polypeptide is Small ribosomal subunit protein uS3 (Pseudomonas entomophila (strain L48)).